We begin with the raw amino-acid sequence, 421 residues long: NAD-specific glutamate dehydrogenase (421 aa).

Substrate contacts are provided by K70 and K94. K106 acts as the Proton donor in catalysis. NAD(+)-binding residues include T191 and N222. S355 contributes to the substrate binding site.

Belongs to the Glu/Leu/Phe/Val dehydrogenases family. Homohexamer.

It catalyses the reaction L-glutamate + NAD(+) + H2O = 2-oxoglutarate + NH4(+) + NADH + H(+). Its pathway is amino-acid degradation; L-glutamate degradation via hydroxyglutarate pathway; crotonoyl-CoA from L-glutamate: step 1/5. This Peptoniphilus asaccharolyticus (Peptostreptococcus asaccharolyticus) protein is NAD-specific glutamate dehydrogenase.